We begin with the raw amino-acid sequence, 273 residues long: Formamidopyrimidine-DNA glycosylase (273 aa).

Residue Pro2 is the Schiff-base intermediate with DNA of the active site. The active-site Proton donor is the Glu3. Lys58 (proton donor; for beta-elimination activity) is an active-site residue. 3 residues coordinate DNA: His92, Arg111, and Lys153. The segment at 238–272 (KVYGREGQSCLSCSSTIIKIKHSGRSTFYCKTCQY) adopts an FPG-type zinc-finger fold. The active-site Proton donor; for delta-elimination activity is the Arg262.

It belongs to the FPG family. In terms of assembly, monomer. Zn(2+) is required as a cofactor.

It carries out the reaction Hydrolysis of DNA containing ring-opened 7-methylguanine residues, releasing 2,6-diamino-4-hydroxy-5-(N-methyl)formamidopyrimidine.. It catalyses the reaction 2'-deoxyribonucleotide-(2'-deoxyribose 5'-phosphate)-2'-deoxyribonucleotide-DNA = a 3'-end 2'-deoxyribonucleotide-(2,3-dehydro-2,3-deoxyribose 5'-phosphate)-DNA + a 5'-end 5'-phospho-2'-deoxyribonucleoside-DNA + H(+). Its function is as follows. Involved in base excision repair of DNA damaged by oxidation or by mutagenic agents. Acts as a DNA glycosylase that recognizes and removes damaged bases. Has a preference for oxidized purines, such as 7,8-dihydro-8-oxoguanine (8-oxoG). Has AP (apurinic/apyrimidinic) lyase activity and introduces nicks in the DNA strand. Cleaves the DNA backbone by beta-delta elimination to generate a single-strand break at the site of the removed base with both 3'- and 5'-phosphates. This chain is Formamidopyrimidine-DNA glycosylase, found in Rickettsia peacockii (strain Rustic).